The following is a 423-amino-acid chain: Serine--tRNA ligase (423 aa).

Residue 230-232 (TAE) participates in L-serine binding. 261 to 263 (RAE) is an ATP binding site. Glutamate 284 is a binding site for L-serine. 348–351 (EISS) lines the ATP pocket. Serine 384 serves as a coordination point for L-serine.

The protein belongs to the class-II aminoacyl-tRNA synthetase family. Type-1 seryl-tRNA synthetase subfamily. Homodimer. The tRNA molecule binds across the dimer.

The protein localises to the cytoplasm. It catalyses the reaction tRNA(Ser) + L-serine + ATP = L-seryl-tRNA(Ser) + AMP + diphosphate + H(+). The catalysed reaction is tRNA(Sec) + L-serine + ATP = L-seryl-tRNA(Sec) + AMP + diphosphate + H(+). The protein operates within aminoacyl-tRNA biosynthesis; selenocysteinyl-tRNA(Sec) biosynthesis; L-seryl-tRNA(Sec) from L-serine and tRNA(Sec): step 1/1. Catalyzes the attachment of serine to tRNA(Ser). Is also able to aminoacylate tRNA(Sec) with serine, to form the misacylated tRNA L-seryl-tRNA(Sec), which will be further converted into selenocysteinyl-tRNA(Sec). This Acetivibrio thermocellus (strain ATCC 27405 / DSM 1237 / JCM 9322 / NBRC 103400 / NCIMB 10682 / NRRL B-4536 / VPI 7372) (Clostridium thermocellum) protein is Serine--tRNA ligase.